Here is a 244-residue protein sequence, read N- to C-terminus: E3 ubiquitin-protein ligase RNF166 (244 aa).

The interval 10 to 30 is disordered; sequence AQRPQAPGPGPPRPPPPAGPA. Pro residues predominate over residues 15 to 28; sequence APGPGPPRPPPPAG. An RING-type zinc finger spans residues 40–80; sequence CPICLEVFHRAVGIAGCGHTFCGECLQPCLQVPSPLCPLCR. Zn(2+) is bound by residues Cys105, Cys108, His120, and Cys124. The C2HC RNF-type zinc-finger motif lies at 105–124; sequence CRGCSKKVTLAKMRSHVSSC. Residues 228–244 enclose the UIM domain; the sequence is DEEAALQAALALSLSEN.

Its subcellular location is the cytoplasm. It catalyses the reaction S-ubiquitinyl-[E2 ubiquitin-conjugating enzyme]-L-cysteine + [acceptor protein]-L-lysine = [E2 ubiquitin-conjugating enzyme]-L-cysteine + N(6)-ubiquitinyl-[acceptor protein]-L-lysine.. Its pathway is protein modification; protein ubiquitination. Functionally, E3 ubiquitin-protein ligase that promotes the ubiquitination of different substrates. This chain is E3 ubiquitin-protein ligase RNF166 (RNF166), found in Gallus gallus (Chicken).